Here is a 3412-residue protein sequence, read N- to C-terminus: Genome polyprotein (3412 aa).

Residues 1–104 (MSGRKAQGKT…LSSRKRRSNE (104 aa)) are Cytoplasmic-facing. The tract at residues 38–72 (PGPSRGVQGFIFFFLFNILTGKKLTAHLKKLWRML) is hydrophobic; homodimerization of capsid protein C. Residues 102–121 (SNEMALFPLLLLGLLALSGG) constitute a propeptide, ER anchor for the capsid protein C, removed in mature form by serine protease NS3. The helical transmembrane segment at 105-125 (MALFPLLLLGLLALSGGVTLV) threads the bilayer. Residues 126-244 (RKNRWLLLNV…GERQLQKIER (119 aa)) are Extracellular-facing. N-linked (GlcNAc...) asparagine; by host glycans are attached at residues N134 and N150. The chain crosses the membrane as a helical span at residues 245–265 (WLVRNPFFAVTALAIAYLVGN). Over 266 to 270 (NTTQR) the chain is Cytoplasmic. Residues 271 to 285 (VVIALLVLAVGPAYS) traverse the membrane as a helical segment. Over 286-730 (AHCIGITDRD…TVFGSAFQGL (445 aa)) the chain is Extracellular. 8 cysteine pairs are disulfide-bonded: C288–C315, C345–C401, C345–C406, C359–C390, C377–C401, C377–C406, C467–C568, and C585–C615. The segment at 383 to 396 (DRGWGNGCGLFGKG) is fusion peptide. A helical membrane pass occupies residues 731–751 (FGGLSWITKVIMGAVLIWVGI). Over 752 to 757 (NTRNMT) the chain is Extracellular. A helical transmembrane segment spans residues 758–778 (MSMSMILVGVIMMFLSLGVGA). Residues 779 to 1132 (DQGCAVNFGK…LVRSWVTAGE (354 aa)) are Extracellular-facing. 6 cysteine pairs are disulfide-bonded: C782/C793, C833/C921, C957/C1002, C1058/C1107, C1069/C1091, and C1090/C1094. N908 and N986 each carry an N-linked (GlcNAc...) asparagine; by host glycan. A helical membrane pass occupies residues 1133–1153 (VHAVPFGLVSMMIAMEVVLRR). The Cytoplasmic portion of the chain corresponds to 1154–1201 (RQGPKQMLVGGVVLLGAMLVGQVTVLDLVKFVVAVGLHFHEINNGGDA). Residues 1202–1222 (MYMALIASFSIRPGLLMGFGL) form a helical membrane-spanning segment. Residues 1223–1287 (RTLWSPRERL…ILPLMALMTP (65 aa)) are Lumenal-facing. Residues 1288-1308 (MTMHEVRMATMLFCTVVIIGV) traverse the membrane as a helical segment. Over 1309–1355 (LHQNSKDTSMQKTIPIVALTLTSYMGLTQPFLGLCAYMSTQVFGRRS) the chain is Cytoplasmic. A helical transmembrane segment spans residues 1356–1376 (IPVNEALAAAGLVGVLAGLAF). Residues 1377–1378 (QD) lie on the Lumenal side of the membrane. The helical transmembrane segment at 1379–1399 (MENFLGPIAVGGILMMLVSVA) threads the bilayer. Over 1400–1456 (GRVDGLELKKLGEISWEEEAEISGSSSRYDVALSEQGEFKLLSEDKVPWDQIVMTSL) the chain is Cytoplasmic. The segment at 1407 to 1446 (LKKLGEISWEEEAEISGSSSRYDVALSEQGEFKLLSEDKV) is interacts with and activates NS3 protease. Residues 1457 to 1477 (ALVGAAIHPFALLLVLGGWIL) constitute an intramembrane region (helical). Residues 1478–2157 (HIKGARRSGD…RNALSMMPEA (680 aa)) are Cytoplasmic-facing. Residues 1485–1665 (SGDVLWDIPT…ELKEESKEEL (181 aa)) form the Peptidase S7 domain. Catalysis depends on charge relay system; for serine protease NS3 activity residues H1537, D1561, and S1622. The Helicase ATP-binding domain maps to 1669–1825 (PTMLKKGMTT…HSNGEIEDVQ (157 aa)). The important for RNA-binding stretch occupies residues 1673–1676 (KKGM). Position 1682-1689 (1682-1689 (FHPGAGKT)) interacts with ATP. Residues 1773-1776 (DEAH) carry the DEAH box motif. Residues 1836 to 1997 (GHEWILADKR…VRGGMVAPLY (162 aa)) form the Helicase C-terminal domain. An N6-acetyllysine; by host modification is found at K1877. A disordered region spans residues 1942 to 1963 (AAQRRGRIGRNPNRDGDSYYYS). A helical transmembrane segment spans residues 2158 to 2178 (MTIVMLFLLAGLLTSGAVIFF). Residues 2179-2186 (MSPKGMSR) are Lumenal-facing. Residues 2187–2207 (MSMAMGTMAGSGYLMFLGGVK) constitute an intramembrane region (helical). The Lumenal segment spans residues 2208–2209 (PT). Residues 2210-2230 (HISYVMLIFFVLMVVVIPEPG) traverse the membrane as a helical segment. The Cytoplasmic segment spans residues 2231 to 2241 (QQRTIQDNQVA). A helical membrane pass occupies residues 2242 to 2262 (YLIIGILTLLSVVAANELGML). At 2263-2293 (EKTKEDFFGKRDITTPSGAIPWSWPDLDLKP) the chain is on the lumenal side. An intramembrane region (helical) is located at residues 2294-2314 (GAAWTVYVGIVTMLSPMLHHW). Topologically, residues 2315–2360 (IKVEYGNLSLSGIAQSASVLSFMDKGIPFMKMNISVVILLVSGWNS) are lumenal. The chain crosses the membrane as a helical span at residues 2361–2380 (ITVIPLLCGIGGAMLHWTLI). Residues 2381–2421 (LPGIKAQQSKLAQKRVFHGVAKNPVVDGNPTADIEEAPEMP) lie on the Cytoplasmic side of the membrane. A helical membrane pass occupies residues 2422–2442 (ALYEKKLALYLLLALSLMSVA). Topologically, residues 2443–2445 (MCR) are lumenal. The chain crosses the membrane as a helical span at residues 2446–2466 (TPFSLAEGIVLSSAALGPLIE). Over 2467–3411 (GNTSLLWNGP…VDADLQPGEL (945 aa)) the chain is Cytoplasmic. The mRNA cap 0-1 NS5-type MT domain occupies 2508–2772 (GSASGKTLGE…DVILPIGTRS (265 aa)). S-adenosyl-L-methionine is bound at residue S2563. S2563 carries the post-translational modification Phosphoserine. K2568 serves as the catalytic For 2'-O-MTase activity. S-adenosyl-L-methionine-binding residues include G2593, W2594, T2611, L2612, D2638, and V2639. Catalysis depends on D2653, which acts as the For 2'-O-MTase activity. I2654 lines the S-adenosyl-L-methionine pocket. Catalysis depends on for 2'-O-MTase activity residues K2689 and E2725. Y2727 is a binding site for S-adenosyl-L-methionine. Positions 2879 to 2912 (RKIMKVVNRWLFRHLSREKNPRLCTKEEFIAKVR) match the Nuclear localization signal motif. E2946, H2950, C2955, and C2958 together coordinate Zn(2+). Residues 3036–3188 (GGFYADDTAG…RPVDDRFGLA (153 aa)) form the RdRp catalytic domain. Positions 3223, 3239, and 3358 each coordinate Zn(2+).

It in the N-terminal section; belongs to the class I-like SAM-binding methyltransferase superfamily. mRNA cap 0-1 NS5-type methyltransferase family. Homodimer. Interacts (via N-terminus) with host EXOC1 (via C-terminus); this interaction results in EXOC1 degradation through the proteasome degradation pathway. In terms of assembly, forms heterodimers with envelope protein E in the endoplasmic reticulum and Golgi. As to quaternary structure, homodimer; in the endoplasmic reticulum and Golgi. Interacts with protein prM. Interacts with non-structural protein 1. Homodimer; Homohexamer when secreted. Interacts with envelope protein E. In terms of assembly, interacts (via N-terminus) with serine protease NS3. As to quaternary structure, forms a heterodimer with serine protease NS3. May form homooligomers. Forms a heterodimer with NS2B. Interacts with non-structural protein 2A (via N-terminus). Interacts with NS4B. Interacts with unphosphorylated RNA-directed RNA polymerase NS5; this interaction stimulates RNA-directed RNA polymerase NS5 guanylyltransferase activity. NS3 interacts with host PDCD6IP; this interaction contributes to virion release. In terms of assembly, interacts with serine protease NS3. As to quaternary structure, homodimer. Interacts with host STAT2; this interaction prevents the establishment of cellular antiviral state. Interacts with serine protease NS3. Interacts with host TRIM23; this interaction leads to NS5 ubiquitination. Specific enzymatic cleavages in vivo yield mature proteins. The nascent capsid protein C contains a C-terminal hydrophobic domain that act as a signal sequence for translocation of prM into the lumen of the ER. Mature capsid protein C is cleaved at a site upstream of this hydrophobic domain by NS3. prM is cleaved in post-Golgi vesicles by a host furin, releasing the mature small envelope protein M, and peptide pr. Non-structural protein 2A-alpha, a C-terminally truncated form of non-structural protein 2A, results from partial cleavage by NS3. Specific enzymatic cleavages in vivo yield mature proteins peptide 2K acts as a signal sequence and is removed from the N-terminus of NS4B by the host signal peptidase in the ER lumen. Signal cleavage at the 2K-4B site requires a prior NS3 protease-mediated cleavage at the 4A-2K site. In terms of processing, cleaved in post-Golgi vesicles by a host furin, releasing the mature small envelope protein M, and peptide pr. This cleavage is incomplete as up to 30% of viral particles still carry uncleaved prM. Post-translationally, N-glycosylated. N-glycosylated. The excreted form is glycosylated and this is required for efficient secretion of the protein from infected cells. In terms of processing, polyubiquitinated; ubiquitination is probably mediated by host TRIM23 and is prerequisite for NS5-STAT2 interaction. NS5 is not ISGylated or sumoylated. Post-translationally, acetylated by host KAT5. Acetylation modulates NS3 RNA-binding and unwinding activities and plays an important positive role for viral replication. Phosphorylated on serines residues. This phosphorylation may trigger NS5 nuclear localization.

Its subcellular location is the virion. It is found in the host nucleus. It localises to the host cytoplasm. The protein localises to the host perinuclear region. The protein resides in the secreted. Its subcellular location is the virion membrane. It is found in the host endoplasmic reticulum membrane. The catalysed reaction is Selective hydrolysis of -Xaa-Xaa-|-Yaa- bonds in which each of the Xaa can be either Arg or Lys and Yaa can be either Ser or Ala.. It catalyses the reaction RNA(n) + a ribonucleoside 5'-triphosphate = RNA(n+1) + diphosphate. It carries out the reaction a ribonucleoside 5'-triphosphate + H2O = a ribonucleoside 5'-diphosphate + phosphate + H(+). The enzyme catalyses ATP + H2O = ADP + phosphate + H(+). The catalysed reaction is a 5'-end (5'-triphosphoguanosine)-ribonucleoside in mRNA + S-adenosyl-L-methionine = a 5'-end (N(7)-methyl 5'-triphosphoguanosine)-ribonucleoside in mRNA + S-adenosyl-L-homocysteine. It catalyses the reaction a 5'-end (N(7)-methyl 5'-triphosphoguanosine)-ribonucleoside in mRNA + S-adenosyl-L-methionine = a 5'-end (N(7)-methyl 5'-triphosphoguanosine)-(2'-O-methyl-ribonucleoside) in mRNA + S-adenosyl-L-homocysteine + H(+). Its function is as follows. Plays a role in virus budding by binding to the cell membrane and gathering the viral RNA into a nucleocapsid that forms the core of a mature virus particle. During virus entry, may induce genome penetration into the host cytoplasm after hemifusion induced by the surface proteins. Can migrate to the cell nucleus where it modulates host functions. In terms of biological role, inhibits RNA silencing by interfering with host Dicer. Functionally, prevents premature fusion activity of envelope proteins in trans-Golgi by binding to envelope protein E at pH6.0. After virion release in extracellular space, gets dissociated from E dimers. Acts as a chaperone for envelope protein E during intracellular virion assembly by masking and inactivating envelope protein E fusion peptide. prM is the only viral peptide matured by host furin in the trans-Golgi network probably to avoid catastrophic activation of the viral fusion activity in acidic Golgi compartment prior to virion release. prM-E cleavage is inefficient, and many virions are only partially matured. These uncleaved prM would play a role in immune evasion. Its function is as follows. May play a role in virus budding. Exerts cytotoxic effects by activating a mitochondrial apoptotic pathway through M ectodomain. May display a viroporin activity. In terms of biological role, binds to host cell surface receptor and mediates fusion between viral and cellular membranes. Envelope protein is synthesized in the endoplasmic reticulum in the form of heterodimer with protein prM. They play a role in virion budding in the ER, and the newly formed immature particle is covered with 60 spikes composed of heterodimer between precursor prM and envelope protein E. The virion is transported to the Golgi apparatus where the low pH causes dissociation of PrM-E heterodimers and formation of E homodimers. prM-E cleavage is inefficient, and many virions are only partially matured. These uncleaved prM would play a role in immune evasion. Functionally, involved in immune evasion, pathogenesis and viral replication. Once cleaved off the polyprotein, is targeted to three destinations: the viral replication cycle, the plasma membrane and the extracellular compartment. Essential for viral replication. Required for formation of the replication complex and recruitment of other non-structural proteins to the ER-derived membrane structures. Excreted as a hexameric lipoparticle that plays a role against host immune response. Antagonizing the complement function. Binds to the host macrophages and dendritic cells. Inhibits signal transduction originating from Toll-like receptor 3 (TLR3). Component of the viral RNA replication complex that functions in virion assembly and antagonizes the host immune response. Its function is as follows. Required cofactor for the serine protease function of NS3. May have membrane-destabilizing activity and form viroporins. In terms of biological role, displays three enzymatic activities: serine protease, NTPase and RNA helicase. NS3 serine protease, in association with NS2B, performs its autocleavage and cleaves the polyprotein at dibasic sites in the cytoplasm: C-prM, NS2A-NS2B, NS2B-NS3, NS3-NS4A, NS4A-2K and NS4B-NS5. NS3 RNA helicase binds RNA and unwinds dsRNA in the 3' to 5' direction. Also plays a role in virus assembly. Functionally, regulates the ATPase activity of the NS3 helicase activity. NS4A allows NS3 helicase to conserve energy during unwinding. Functions as a signal peptide for NS4B and is required for the interferon antagonism activity of the latter. Its function is as follows. Induces the formation of ER-derived membrane vesicles where the viral replication takes place. Inhibits interferon (IFN)-induced host STAT1 phosphorylation and nuclear translocation, thereby preventing the establishment of cellular antiviral state by blocking the IFN-alpha/beta pathway. In terms of biological role, replicates the viral (+) and (-) RNA genome, and performs the capping of genomes in the cytoplasm. NS5 methylates viral RNA cap at guanine N-7 and ribose 2'-O positions. Besides its role in RNA genome replication, also prevents the establishment of cellular antiviral state by blocking the interferon-alpha/beta (IFN-alpha/beta) signaling pathway. IFN-I induces binding of NS5 to host IFN-activated transcription factor STAT2, preventing its transcriptional activity. Host TRIM23 is the E3 ligase that interacts with and polyubiquitinates NS5 to promote its binding to STAT2 and trigger IFN-I signaling inhibition. The polypeptide is Genome polyprotein (Aedes aegypti (Yellowfever mosquito)).